The primary structure comprises 214 residues: 3-isopropylmalate dehydratase small subunit (214 aa).

Belongs to the LeuD family. LeuD type 1 subfamily. Heterodimer of LeuC and LeuD.

The enzyme catalyses (2R,3S)-3-isopropylmalate = (2S)-2-isopropylmalate. It functions in the pathway amino-acid biosynthesis; L-leucine biosynthesis; L-leucine from 3-methyl-2-oxobutanoate: step 2/4. Its function is as follows. Catalyzes the isomerization between 2-isopropylmalate and 3-isopropylmalate, via the formation of 2-isopropylmaleate. This Desulforapulum autotrophicum (strain ATCC 43914 / DSM 3382 / VKM B-1955 / HRM2) (Desulfobacterium autotrophicum) protein is 3-isopropylmalate dehydratase small subunit.